The primary structure comprises 195 residues: RILP-like protein 2 (195 aa).

An RH1 domain is found at 8 to 92 (SPTQAFDKDV…RTETDRVVAE (85 aa)). Residues 58-149 (LEMFETMVNK…AQEELQLYKS (92 aa)) adopt a coiled-coil conformation. Residues 115–185 (RPRFTMQELK…ITEESKEKST (71 aa)) enclose the RH2 domain.

Belongs to the RILPL family.

The protein localises to the cytoplasm. It is found in the cytosol. The protein resides in the cytoskeleton. It localises to the microtubule organizing center. Its subcellular location is the centrosome. The protein localises to the cell projection. It is found in the cilium. Involved in cell shape and neuronal morphogenesis, positively regulating the establishment and maintenance of dendritic spines. Plays a role in cellular protein transport. The sequence is that of RILP-like protein 2 (rilpl2) from Danio rerio (Zebrafish).